The following is a 587-amino-acid chain: Putative inactive receptor-like protein kinase At1g64210 (587 aa).

The N-terminal stretch at 1-19 (MQIFLFFFSLILCFVLISS) is a signal peptide. Residues 20-232 (QTLEDDKKAL…KTPFGLSQLA (213 aa)) lie on the Extracellular side of the membrane. N-linked (GlcNAc...) asparagine glycans are attached at residues Asn37 and Asn44. LRR repeat units follow at residues 89 to 112 (SLKF…TNLK), 113 to 136 (SLTH…SELK), 137 to 160 (NLKV…SGLT), 161 to 183 (SLQV…HLPK), and 184 to 205 (LSQI…LQRF). 4 N-linked (GlcNAc...) asparagine glycosylation sites follow: Asn149, Asn169, Asn188, and Asn214. The chain crosses the membrane as a helical span at residues 233–253 (FLLILSAACVLCVSGLSFIMI). Topologically, residues 254 to 587 (TCFGKTRISG…IEDIRSVDAE (334 aa)) are cytoplasmic. Residues 307-581 (SSSAEVLGKG…AQVLKLIEDI (275 aa)) enclose the Protein kinase domain. Phosphoserine is present on Ser309. Residues 313–321 (LGKGAFGTT) and Lys335 contribute to the ATP site. At Ser386 the chain carries Phosphoserine. Phosphothreonine is present on residues Thr462, Thr463, Thr466, and Thr477.

It is found in the cell membrane. The chain is Putative inactive receptor-like protein kinase At1g64210 from Arabidopsis thaliana (Mouse-ear cress).